A 420-amino-acid polypeptide reads, in one-letter code: L-rhamnose isomerase (420 aa).

3 residues coordinate Mn(2+): His-264, Asp-296, and Asp-298.

The protein belongs to the rhamnose isomerase family. It depends on Mn(2+) as a cofactor.

The protein resides in the cytoplasm. It catalyses the reaction L-rhamnopyranose = L-rhamnulose. It participates in carbohydrate degradation; L-rhamnose degradation; glycerone phosphate from L-rhamnose: step 1/3. Its function is as follows. Catalyzes the interconversion of L-rhamnose and L-rhamnulose. This chain is L-rhamnose isomerase, found in Listeria innocua serovar 6a (strain ATCC BAA-680 / CLIP 11262).